The primary structure comprises 325 residues: tRNA N6-adenosine threonylcarbamoyltransferase (325 aa).

Fe cation contacts are provided by His-107, His-111, and Tyr-127. Substrate contacts are provided by residues 127-131 (YVSGG), Asp-159, Gly-172, Glu-176, and Asn-257. Asp-285 is a Fe cation binding site.

Belongs to the KAE1 / TsaD family. In terms of assembly, monomer. Component of the KEOPS complex that consists of Kae1, Bud32, Cgi121 and Pcc1; the whole complex dimerizes. Fe(2+) is required as a cofactor.

The protein resides in the cytoplasm. It catalyses the reaction L-threonylcarbamoyladenylate + adenosine(37) in tRNA = N(6)-L-threonylcarbamoyladenosine(37) in tRNA + AMP + H(+). Its function is as follows. Required for the formation of a threonylcarbamoyl group on adenosine at position 37 (t(6)A37) in tRNAs that read codons beginning with adenine. Is a component of the KEOPS complex that is probably involved in the transfer of the threonylcarbamoyl moiety of threonylcarbamoyl-AMP (TC-AMP) to the N6 group of A37. Kae1 likely plays a direct catalytic role in this reaction, but requires other protein(s) of the complex to fulfill this activity. In Thermococcus gammatolerans (strain DSM 15229 / JCM 11827 / EJ3), this protein is tRNA N6-adenosine threonylcarbamoyltransferase.